The following is a 210-amino-acid chain: Cytochrome c biogenesis ATP-binding export protein CcmA (210 aa).

An ABC transporter domain is found at 4–207 (LAVRDLAVAR…RQSRPAGFNE (204 aa)). 36 to 43 (GPNGIGKT) lines the ATP pocket.

It belongs to the ABC transporter superfamily. CcmA exporter (TC 3.A.1.107) family. As to quaternary structure, the complex is composed of two ATP-binding proteins (CcmA) and two transmembrane proteins (CcmB).

It is found in the cell inner membrane. The enzyme catalyses heme b(in) + ATP + H2O = heme b(out) + ADP + phosphate + H(+). Part of the ABC transporter complex CcmAB involved in the biogenesis of c-type cytochromes; once thought to export heme, this seems not to be the case, but its exact role is uncertain. Responsible for energy coupling to the transport system. This Paracoccus denitrificans (strain Pd 1222) protein is Cytochrome c biogenesis ATP-binding export protein CcmA.